The chain runs to 456 residues: MSRAHGSPRSFFPVGNPFRVMFPGGAHLSRKLQELLASYEDALALSLRKLKPEAASDVLTLSWMRLAVDCLSELHTNIANLITDLELPVSDWDDKWVDIYLNSSVKLLDICIALSSELSRLDQGQLLLQYALHVLGSESGVPSQEQLKRAEPSLREWMELVGVRCPRLVSCSATLQELAGNLSLMKVKNSVKGKVLMRALYGIESVTVFVCSIFVAVLSGSPKPLVELHVPEKFGWSQAFNDLHTAVSEELTRQLAGGSVAAVKELEEVEACAKRLHVLASTSQLEEEAANLANAVSHTEEEVMSDSIVQEGDHHCGLKLADDTTRECEVVISESIAEEGTHEAEMKKDISYEKGVAMVERISYEEHQDSNVKQANGSSDESALVVPERTSVQESKEELLNCISSMSKSAEGLRHGLDSLSKRVGDFFQIVLTGRDALLCNLRISDAASKVAEVSS.

Residues 205 to 221 (SVTVFVCSIFVAVLSGS) traverse the membrane as a helical segment.

The protein belongs to the ROH1 family.

The protein localises to the membrane. The chain is UPF0496 protein 4 from Oryza sativa subsp. indica (Rice).